Reading from the N-terminus, the 34-residue chain is Photosystem II reaction center protein Psb30 (34 aa).

A helical transmembrane segment spans residues 5–25 (VLAQLTVLAFVIAVGPITLIW).

This sequence belongs to the Psb30/Ycf12 family. As to quaternary structure, PSII is composed of 1 copy each of membrane proteins PsbA, PsbB, PsbC, PsbD, PsbE, PsbF, PsbH, PsbI, PsbJ, PsbK, PsbL, PsbM, PsbT, PsbX, PsbY, PsbZ, Psb30/Ycf12, peripheral proteins of the oxygen-evolving complex and a large number of cofactors. It forms dimeric complexes.

The protein resides in the plastid. It is found in the chloroplast thylakoid membrane. A core subunit of photosystem II (PSII), probably helps stabilize the reaction center. This chain is Photosystem II reaction center protein Psb30, found in Cyanidioschyzon merolae (strain NIES-3377 / 10D) (Unicellular red alga).